The chain runs to 751 residues: Catalase-peroxidase (751 aa).

The N-terminal stretch at 1-12 is a signal peptide; that stretch reads MSNETKCPFSHA. A cross-link (tryptophyl-tyrosyl-methioninium (Trp-Tyr) (with M-267)) is located at residues 91-241; it reads WHSAGTYRIG…LAAVQMGLIY (151 aa). The active-site Proton acceptor is His-92. The segment at residues 241–267 is a cross-link (tryptophyl-tyrosyl-methioninium (Tyr-Met) (with W-91)); sequence YVNPEGPDGNPDPLAAAHDIRESFGRM. Position 282 (His-282) interacts with heme b.

The protein belongs to the peroxidase family. Peroxidase/catalase subfamily. Homodimer or homotetramer. Requires heme b as cofactor. In terms of processing, formation of the three residue Trp-Tyr-Met cross-link is important for the catalase, but not the peroxidase activity of the enzyme.

It carries out the reaction H2O2 + AH2 = A + 2 H2O. It catalyses the reaction 2 H2O2 = O2 + 2 H2O. Functionally, bifunctional enzyme with both catalase and broad-spectrum peroxidase activity. The polypeptide is Catalase-peroxidase (Cupriavidus necator (strain ATCC 17699 / DSM 428 / KCTC 22496 / NCIMB 10442 / H16 / Stanier 337) (Ralstonia eutropha)).